The chain runs to 592 residues: Beta-fructofuranosidase, insoluble isoenzyme 1 (592 aa).

Residues 1–39 (MGVTIRNRNYDHGSLPFLQSLLAILLVTTTTLHINGVEA) form the signal peptide. The propeptide occupies 40-48 (FHEIHYNLQ). Asp-74 is a catalytic residue. Residue Asn-170 is glycosylated (N-linked (GlcNAc...) (complex) asparagine). Residue Asn-195 is glycosylated (N-linked (GlcNAc...) asparagine). Asn-311 is a glycosylation site (N-linked (GlcNAc...) (complex) asparagine). An N-linked (GlcNAc...) (high mannose) asparagine glycan is attached at Asn-348. A glycan (N-linked (GlcNAc...) asparagine) is linked at Asn-570.

It belongs to the glycosyl hydrolase 32 family. In terms of tissue distribution, in leaves and roots of young plants.

Its subcellular location is the secreted. The protein localises to the cell wall. It carries out the reaction Hydrolysis of terminal non-reducing beta-D-fructofuranoside residues in beta-D-fructofuranosides.. Functionally, may play an important role in phloem unloading and in stress response. The chain is Beta-fructofuranosidase, insoluble isoenzyme 1 (INV1) from Daucus carota (Wild carrot).